The primary structure comprises 401 residues: Lsg locus putative protein 1 (401 aa).

11 helical membrane passes run 8–28 (VIYL…LPYL), 36–56 (GYGS…VVSL), 87–107 (IIGS…LFYA), 132–152 (SYAF…VALL), 162–182 (KRIL…YFLY), 199–219 (ALFY…SFFL), 237–257 (LGLY…IQAL), 282–302 (WALF…IIPE), 320–340 (FILF…VNYL), 352–372 (CSVL…FTEI), and 374–394 (YIPY…YFMT).

This sequence belongs to the polysaccharide synthase family. HI_0867/HI_1700 subfamily.

It localises to the cell membrane. The polypeptide is Lsg locus putative protein 1 (Haemophilus influenzae (strain ATCC 51907 / DSM 11121 / KW20 / Rd)).